A 163-amino-acid polypeptide reads, in one-letter code: Large ribosomal subunit protein uL22c (163 aa).

Belongs to the universal ribosomal protein uL22 family. As to quaternary structure, part of the 50S ribosomal subunit.

It is found in the plastid. The protein resides in the chloroplast. Functionally, this protein binds specifically to 23S rRNA. In terms of biological role, the globular domain of the protein is located near the polypeptide exit tunnel on the outside of the subunit, while an extended beta-hairpin is found that lines the wall of the exit tunnel in the center of the 70S ribosome. The sequence is that of Large ribosomal subunit protein uL22c (rpl22) from Lobularia maritima (Sweet alyssum).